The sequence spans 346 residues: Low-temperature-induced cysteine proteinase (346 aa).

Residues Lys-1–Ser-17 constitute a propeptide, activation peptide. Disulfide bonds link Cys-39–Cys-81, Cys-73–Cys-114, Cys-172–Cys-223, Cys-256–Cys-268, and Cys-262–Cys-283. Cys-42 is an active-site residue. Active-site residues include His-178 and Asn-198. Residue Asn-215 is glycosylated (N-linked (GlcNAc...) asparagine). Positions Asn-238–Ser-346 are cleaved as a propeptide — removed in mature form.

This sequence belongs to the peptidase C1 family.

The sequence is that of Low-temperature-induced cysteine proteinase from Solanum lycopersicum (Tomato).